The following is an 89-amino-acid chain: UPF0147 protein STK_04605 (89 aa).

This sequence belongs to the UPF0147 family.

In Sulfurisphaera tokodaii (strain DSM 16993 / JCM 10545 / NBRC 100140 / 7) (Sulfolobus tokodaii), this protein is UPF0147 protein STK_04605.